A 75-amino-acid chain; its full sequence is uncharacterized protein (75 aa).

Helical transmembrane passes span 7-26 (LINAVFRIACGLTIMSAASA) and 36-58 (MHLFYIFMGAMKAGSGILRFCPV).

It is found in the cell membrane. This is an uncharacterized protein from Bacillus subtilis (strain 168).